A 118-amino-acid chain; its full sequence is Large ribosomal subunit protein bL20 (118 aa).

Belongs to the bacterial ribosomal protein bL20 family.

Its function is as follows. Binds directly to 23S ribosomal RNA and is necessary for the in vitro assembly process of the 50S ribosomal subunit. It is not involved in the protein synthesizing functions of that subunit. The sequence is that of Large ribosomal subunit protein bL20 from Pelagibacter ubique (strain HTCC1062).